Reading from the N-terminus, the 506-residue chain is NAD(P)H-quinone oxidoreductase subunit 2 (506 aa).

The next 13 helical transmembrane spans lie at 14-34 (AIIPEAFILLGIVGTLLVDLA), 42-62 (WAPSICYLSIGSSLLSLTLQW), 79-99 (LAIAFRAIIALSTLVSLLISW), 108-128 (PIGEFAAIVLSATLGAMLLCG), 132-152 (LISVFISLETLSVASYLLSGY), 167-187 (LLVGSAAAAVYLYGSSFLYGL), 206-226 (FITSLALVFVLSTVAFKIAAV), 240-260 (PTPVVAFLSVGSKTAGFAFAI), 276-296 (LLFTILAILSMALGNVVALAQ), 302-322 (MLAYSSIGQAGFVMIGIVSGT), 330-350 (VLYLAAYLFMNLGAFSCVILF), 374-394 (LGLSLCLLSLGGLPPMLGFFG), and 409-429 (LLVIVGLVTSVISIYYYISVI).

It belongs to the complex I subunit 2 family. NDH-1 can be composed of about 15 different subunits; different subcomplexes with different compositions have been identified which probably have different functions.

It is found in the cellular thylakoid membrane. The enzyme catalyses a plastoquinone + NADH + (n+1) H(+)(in) = a plastoquinol + NAD(+) + n H(+)(out). It carries out the reaction a plastoquinone + NADPH + (n+1) H(+)(in) = a plastoquinol + NADP(+) + n H(+)(out). NDH-1 shuttles electrons from an unknown electron donor, via FMN and iron-sulfur (Fe-S) centers, to quinones in the respiratory and/or the photosynthetic chain. The immediate electron acceptor for the enzyme in this species is believed to be plastoquinone. Couples the redox reaction to proton translocation, and thus conserves the redox energy in a proton gradient. Cyanobacterial NDH-1 also plays a role in inorganic carbon-concentration. This chain is NAD(P)H-quinone oxidoreductase subunit 2, found in Prochlorococcus marinus (strain MIT 9301).